The sequence spans 511 residues: Prolyl 3-hydroxylase OGFOD1 (511 aa).

The tract at residues 1-20 (MTGKRGTAAGTDGSGNKKGK) is disordered. A Fe2OG dioxygenase domain is found at 138-240 (KTVDISCAQY…RLSVSGWFHG (103 aa)). Residues His-156 and Asp-158 each contribute to the Fe cation site. Tyr-170 provides a ligand contact to 2-oxoglutarate. Fe cation is bound at residue His-219. Residue Arg-231 coordinates 2-oxoglutarate. The interval 372–403 (NEESDEGEGPSEPNTVSQQGASSEDDKVPSCS) is disordered.

This sequence belongs to the TPA1 family. Monomer. The cofactor is Fe(2+). It depends on L-ascorbate as a cofactor.

It localises to the cytoplasm. It is found in the nucleus. The catalysed reaction is [ribosomal protein uS12]-L-proline + 2-oxoglutarate + O2 = [ribosomal protein uS12]-(3S)-3-hydroxy-L-proline + succinate + CO2. Prolyl 3-hydroxylase that catalyzes 3-hydroxylation of 'Pro-62' of small ribosomal subunit uS12 (rps23), thereby regulating protein translation termination efficiency. Involved in stress granule formation. This is Prolyl 3-hydroxylase OGFOD1 (ogfod1) from Xenopus laevis (African clawed frog).